The sequence spans 67 residues: Cell division protein ZapB (67 aa).

A coiled-coil region spans residues 3–59; it reads LELLSQLETKIQTALETIELLKLELDEEKEKAANLAEQNHQLKQELSSWNDKITGLV.

This sequence belongs to the ZapB family. In terms of assembly, homodimer. The ends of the coiled-coil dimer bind to each other, forming polymers. Interacts with FtsZ.

It localises to the cytoplasm. Functionally, non-essential, abundant cell division factor that is required for proper Z-ring formation. It is recruited early to the divisome by direct interaction with FtsZ, stimulating Z-ring assembly and thereby promoting cell division earlier in the cell cycle. Its recruitment to the Z-ring requires functional FtsA or ZipA. The polypeptide is Cell division protein ZapB (Shewanella amazonensis (strain ATCC BAA-1098 / SB2B)).